The primary structure comprises 244 residues: MGKRPLVRRRGRGGNQFRSTSTGKVGTKANYPRFPLSEQHEGEIIDLVHERGREAPLAKVRFEDGSVSFVPAVLGAKVGETLQFGLKSKIEKGNVISIQNIPDGTIVCNIEKHFGDGGAIVKSAGTDATVFSHGDEGVTVKLPSGKFTTLNPKNRAMIGTLAGGGASERPFMSAGGKWRNFKAKGKKYPIVRGVAQAAYVHPHGGGRHQHVGQSSTVSRDTPPGAKVGSIAARKTGRARIKERK.

Composition is skewed to basic residues over residues 1–12 (MGKRPLVRRRGR) and 234–244 (KTGRARIKERK). Disordered stretches follow at residues 1-30 (MGKRPLVRRRGRGGNQFRSTSTGKVGTKAN) and 203-244 (HGGG…KERK).

This sequence belongs to the universal ribosomal protein uL2 family. As to quaternary structure, part of the 50S ribosomal subunit. Forms a bridge to the 30S subunit in the 70S ribosome.

One of the primary rRNA binding proteins. Required for association of the 30S and 50S subunits to form the 70S ribosome, for tRNA binding and peptide bond formation. It has been suggested to have peptidyltransferase activity; this is somewhat controversial. Makes several contacts with the 16S rRNA in the 70S ribosome. This chain is Large ribosomal subunit protein uL2, found in Nitrosopumilus maritimus (strain SCM1).